A 77-amino-acid polypeptide reads, in one-letter code: UPF0154 protein LCK_00994 (77 aa).

The helical transmembrane segment at 5-25 threads the bilayer; sequence FGILIFVLGLVIGLVIGFFVA. Residues 50-77 are disordered; that stretch reads SMGQKPSQKKLNQMMAQMKQQSEQSQKK.

Belongs to the UPF0154 family.

It localises to the cell membrane. The chain is UPF0154 protein LCK_00994 from Leuconostoc citreum (strain KM20).